The chain runs to 283 residues: Zinc import ATP-binding protein ZnuC (283 aa).

The ABC transporter domain occupies 13–228; sequence VEMRNAGVHR…PEYVRLFGAR (216 aa). 45–52 lines the ATP pocket; sequence GPNGSGKS. The disordered stretch occupies residues 264–283; the sequence is HHHDHARDGGQGGGGHGHAG. Residues 272 to 283 show a composition bias toward gly residues; that stretch reads GGQGGGGHGHAG.

Belongs to the ABC transporter superfamily. Zinc importer (TC 3.A.1.15.5) family. The complex is composed of two ATP-binding proteins (ZnuC), two transmembrane proteins (ZnuB) and a solute-binding protein (ZnuA).

It localises to the cell inner membrane. It catalyses the reaction Zn(2+)(out) + ATP(in) + H2O(in) = Zn(2+)(in) + ADP(in) + phosphate(in) + H(+)(in). Its function is as follows. Part of the ABC transporter complex ZnuABC involved in zinc import. Responsible for energy coupling to the transport system. The polypeptide is Zinc import ATP-binding protein ZnuC (Chelativorans sp. (strain BNC1)).